The sequence spans 208 residues: Uracil phosphoribosyltransferase (208 aa).

5-phospho-alpha-D-ribose 1-diphosphate is bound by residues Arg-78, Arg-103, and 130-138 (DPMLATGHS). Uracil-binding positions include Ile-193 and 198–200 (GDA). Asp-199 is a binding site for 5-phospho-alpha-D-ribose 1-diphosphate.

Belongs to the UPRTase family. Mg(2+) serves as cofactor.

It catalyses the reaction UMP + diphosphate = 5-phospho-alpha-D-ribose 1-diphosphate + uracil. It functions in the pathway pyrimidine metabolism; UMP biosynthesis via salvage pathway; UMP from uracil: step 1/1. With respect to regulation, allosterically activated by GTP. Its function is as follows. Catalyzes the conversion of uracil and 5-phospho-alpha-D-ribose 1-diphosphate (PRPP) to UMP and diphosphate. This Brucella anthropi (strain ATCC 49188 / DSM 6882 / CCUG 24695 / JCM 21032 / LMG 3331 / NBRC 15819 / NCTC 12168 / Alc 37) (Ochrobactrum anthropi) protein is Uracil phosphoribosyltransferase.